Reading from the N-terminus, the 688-residue chain is Glycine--tRNA ligase beta subunit (688 aa).

This sequence belongs to the class-II aminoacyl-tRNA synthetase family. In terms of assembly, tetramer of two alpha and two beta subunits.

It is found in the cytoplasm. The enzyme catalyses tRNA(Gly) + glycine + ATP = glycyl-tRNA(Gly) + AMP + diphosphate. This Psychromonas ingrahamii (strain DSM 17664 / CCUG 51855 / 37) protein is Glycine--tRNA ligase beta subunit.